Here is a 62-residue protein sequence, read N- to C-terminus: Calmodulin regulator protein PCP4 (62 aa).

Residues 1–39 (MSERQSAGATNGKDKTSGDNDGQKKVQEEFDIDMDAPET) are disordered. The span at 12-28 (GKDKTSGDNDGQKKVQE) shows a compositional bias: basic and acidic residues. The tract at residues 28-40 (EEFDIDMDAPETE) is acidic; binds calcium and is required for modulating the calcium-binding kinetics of calmodulin. One can recognise an IQ domain in the interval 39–62 (TERAAVAIQSQFRKFQKKKAGSQS).

Belongs to the PCP4 family. Binds to both calcium-free and calcium-bound calmodulin. The affinity for the calcium-bound form is 50-fold greater.

Functions as a modulator of calcium-binding by calmodulin. Thereby, regulates calmodulin activity and the different processes it controls. For instance, may play a role in neuronal differentiation through activation of calmodulin-dependent kinase signaling pathways. The sequence is that of Calmodulin regulator protein PCP4 from Mus musculus (Mouse).